The primary structure comprises 193 residues: ATP-dependent Clp protease proteolytic subunit (193 aa).

Catalysis depends on S98, which acts as the Nucleophile. Residue H123 is part of the active site.

Belongs to the peptidase S14 family. In terms of assembly, fourteen ClpP subunits assemble into 2 heptameric rings which stack back to back to give a disk-like structure with a central cavity, resembling the structure of eukaryotic proteasomes.

Its subcellular location is the cytoplasm. It catalyses the reaction Hydrolysis of proteins to small peptides in the presence of ATP and magnesium. alpha-casein is the usual test substrate. In the absence of ATP, only oligopeptides shorter than five residues are hydrolyzed (such as succinyl-Leu-Tyr-|-NHMec, and Leu-Tyr-Leu-|-Tyr-Trp, in which cleavage of the -Tyr-|-Leu- and -Tyr-|-Trp bonds also occurs).. Its function is as follows. Cleaves peptides in various proteins in a process that requires ATP hydrolysis. Has a chymotrypsin-like activity. Plays a major role in the degradation of misfolded proteins. The chain is ATP-dependent Clp protease proteolytic subunit from Pasteurella multocida (strain Pm70).